Consider the following 356-residue polypeptide: Guanine nucleotide-binding protein alpha-2 subunit (356 aa).

The segment at 1-25 (MGLCQSEEEKVGSQKSRAIDKEIKQ) is disordered. G2 is lipidated: N-myristoyl glycine. Residue C4 is the site of S-palmitoyl cysteine attachment. Residues 7-25 (EEEKVGSQKSRAIDKEIKQ) show a composition bias toward basic and acidic residues. The region spanning 14-338 (QKSRAIDKEI…TDTNQVQKIL (325 aa)) is the G-alpha domain. The segment at 17-30 (RAIDKEIKQNQSND) is G1 motif. Q25, Q27, S28, N29, D30, V135, E160, A166, V188, E254, S255, C257, and F310 together coordinate GTP. N29 is a binding site for Mg(2+). The segment at 158 to 166 (FFENLDRIA) is G2 motif. A166 serves as a coordination point for Mg(2+). The segment at 181-190 (RTKTTGIVEV) is G3 motif. A G4 motif region spans residues 250-257 (MRLFESIC). Residues 308–313 (QKFEAL) are G5 motif.

This sequence belongs to the G-alpha family. G(q) subfamily. G proteins are composed of 3 units; alpha, beta and gamma. The alpha chain contains the guanine nucleotide binding site. Mg(2+) is required as a cofactor.

Its function is as follows. Guanine nucleotide-binding proteins (G proteins) are involved as modulators or transducers in various transmembrane signaling systems. Involved in behavioral responses to P.aeruginosa by controlling the expression of daf-7, a member of the TGF-beta family, in ASJ sensory neurons. The chain is Guanine nucleotide-binding protein alpha-2 subunit (gpa-2) from Caenorhabditis briggsae.